Reading from the N-terminus, the 577-residue chain is Peroxynitrite isomerase THAP4 (577 aa).

A THAP-type zinc finger spans residues 1–85 (MVICCAAVNC…LKPTAVPSIF (85 aa)). The interval 84–221 (IFHLTEKKRG…DKSGISMDDF (138 aa)) is disordered. A compositionally biased stretch (low complexity) spans 157–170 (AAQEAASQEQAQQA). Position 163 is a phosphoserine (Ser163). The short motif at 235–238 (LHSY) is the HCFC1-binding motif (HBM) element. At Ser239 the chain carries Phosphoserine. The tract at residues 240–324 (FSSKHTRERP…AVQSEHSDAS (85 aa)) is disordered. A compositionally biased stretch (basic and acidic residues) spans 247–266 (ERPSVPREPIDRKRLKKDVE). Low complexity predominate over residues 290 to 300 (TATPQKPSQSP). A nitrobindin region spans residues 415-577 (PPKMNPVVEP…LHVTYKKVTP (163 aa)). Heme b is bound by residues Thr444 and His567.

In the C-terminal section; belongs to the nitrobindin family. Homodimer. Heme b is required as a cofactor.

Its subcellular location is the cytoplasm. It localises to the nucleus. It catalyses the reaction peroxynitrite = nitrate. Its pathway is nitrogen metabolism. In terms of biological role, heme-binding protein able to scavenge peroxynitrite and to protect free L-tyrosine against peroxynitrite-mediated nitration, by acting as a peroxynitrite isomerase that converts peroxynitrite to nitrate. Therefore, this protein likely plays a role in peroxynitrite sensing and in the detoxification of reactive nitrogen and oxygen species (RNS and ROS, respectively). Is able to bind nitric oxide (NO) in vitro, but may act as a sensor of peroxynitrite levels in vivo, possibly modulating the transcriptional activity residing in the N-terminal region. This Homo sapiens (Human) protein is Peroxynitrite isomerase THAP4.